We begin with the raw amino-acid sequence, 227 residues long: Cytochrome c oxidase subunit 2 (227 aa).

Topologically, residues 1–14 are mitochondrial intermembrane; it reads MAYPFQLGLQDATS. The helical transmembrane segment at 15 to 45 threads the bilayer; the sequence is PIMEELTNFHDHTLMIVFLISSLVLYIISLM. Residues 46–59 are Mitochondrial matrix-facing; sequence LTTKLTHTSTMDAQ. A helical membrane pass occupies residues 60–87; sequence EVETIWTILPAAILVLIALPSLRILYMM. At 88–227 the chain is on the mitochondrial intermembrane side; sequence DEINNPALTV…YFENWSASMI (140 aa). The Cu cation site is built by histidine 161, cysteine 196, glutamate 198, cysteine 200, histidine 204, and methionine 207. Residue glutamate 198 coordinates Mg(2+). The residue at position 218 (tyrosine 218) is a Phosphotyrosine.

The protein belongs to the cytochrome c oxidase subunit 2 family. As to quaternary structure, component of the cytochrome c oxidase (complex IV, CIV), a multisubunit enzyme composed of 14 subunits. The complex is composed of a catalytic core of 3 subunits MT-CO1, MT-CO2 and MT-CO3, encoded in the mitochondrial DNA, and 11 supernumerary subunits COX4I, COX5A, COX5B, COX6A, COX6B, COX6C, COX7A, COX7B, COX7C, COX8 and NDUFA4, which are encoded in the nuclear genome. The complex exists as a monomer or a dimer and forms supercomplexes (SCs) in the inner mitochondrial membrane with NADH-ubiquinone oxidoreductase (complex I, CI) and ubiquinol-cytochrome c oxidoreductase (cytochrome b-c1 complex, complex III, CIII), resulting in different assemblies (supercomplex SCI(1)III(2)IV(1) and megacomplex MCI(2)III(2)IV(2)). Found in a complex with TMEM177, COA6, COX18, COX20, SCO1 and SCO2. Interacts with TMEM177 in a COX20-dependent manner. Interacts with COX20. Interacts with COX16. Requires Cu cation as cofactor.

It localises to the mitochondrion inner membrane. It catalyses the reaction 4 Fe(II)-[cytochrome c] + O2 + 8 H(+)(in) = 4 Fe(III)-[cytochrome c] + 2 H2O + 4 H(+)(out). Functionally, component of the cytochrome c oxidase, the last enzyme in the mitochondrial electron transport chain which drives oxidative phosphorylation. The respiratory chain contains 3 multisubunit complexes succinate dehydrogenase (complex II, CII), ubiquinol-cytochrome c oxidoreductase (cytochrome b-c1 complex, complex III, CIII) and cytochrome c oxidase (complex IV, CIV), that cooperate to transfer electrons derived from NADH and succinate to molecular oxygen, creating an electrochemical gradient over the inner membrane that drives transmembrane transport and the ATP synthase. Cytochrome c oxidase is the component of the respiratory chain that catalyzes the reduction of oxygen to water. Electrons originating from reduced cytochrome c in the intermembrane space (IMS) are transferred via the dinuclear copper A center (CU(A)) of subunit 2 and heme A of subunit 1 to the active site in subunit 1, a binuclear center (BNC) formed by heme A3 and copper B (CU(B)). The BNC reduces molecular oxygen to 2 water molecules using 4 electrons from cytochrome c in the IMS and 4 protons from the mitochondrial matrix. In Rhabdomys pumilio (Four-striped grass mouse), this protein is Cytochrome c oxidase subunit 2 (MT-CO2).